Here is a 142-residue protein sequence, read N- to C-terminus: Sec-independent protein translocase protein TatB (142 aa).

Residues 1 to 21 (MFDFGFSELVVIGVVMLIVVG) form a helical membrane-spanning segment. Residues 99–142 (AAPPDNTTSAESQAAADPAAVDSSQQLELRLDTTPKQVVGSDKA) form a disordered region. Residues 107–124 (SAESQAAADPAAVDSSQQ) show a composition bias toward low complexity.

Belongs to the TatB family. The Tat system comprises two distinct complexes: a TatABC complex, containing multiple copies of TatA, TatB and TatC subunits, and a separate TatA complex, containing only TatA subunits. Substrates initially bind to the TatABC complex, which probably triggers association of the separate TatA complex to form the active translocon.

The protein localises to the cell inner membrane. Part of the twin-arginine translocation (Tat) system that transports large folded proteins containing a characteristic twin-arginine motif in their signal peptide across membranes. Together with TatC, TatB is part of a receptor directly interacting with Tat signal peptides. TatB may form an oligomeric binding site that transiently accommodates folded Tat precursor proteins before their translocation. This Azoarcus sp. (strain BH72) protein is Sec-independent protein translocase protein TatB.